The following is a 319-amino-acid chain: MKFIIDRFDGKKNYEQIYTLAKEDIEAKTLLGVLLLIKQTQDITLNFTASCRMAICGACAVRVNGHSYLACDTKMTELFEEYKNSDTFRISPLGNHRVISDLVVDWEPAIENLRKIKPGLVAKSEFSAKEGCQQNQEEFDRIIKQWDCILCGSCVSECNKFSADQSDYMEPFVFTQAWRLANDSRSKDPMIHVKPAVANGLWNCVHCHECTNRCPKHISAAEDIANLRVMAMKKGLNTGVGPAHAKAFHTDLVEGSGRLNEIRLALRIEGVATVARTGMAITLMRAGKMNPLEIFGGHTIKGHEDLVKMIDAAKAATKE.

The region spanning 1-96 (MKFIIDRFDG…TFRISPLGNH (96 aa)) is the 2Fe-2S ferredoxin-type domain. Positions 51, 56, 59, and 71 each coordinate [2Fe-2S] cluster. 2 consecutive 4Fe-4S ferredoxin-type domains span residues 139-168 (FDRIIKQWDCILCGSCVSECNKFSADQSDY) and 193-224 (VKPAVANGLWNCVHCHECTNRCPKHISAAEDI). [4Fe-4S] cluster-binding residues include C148, C151, C154, C158, C204, C207, C210, and C214.

The protein belongs to the succinate dehydrogenase/fumarate reductase iron-sulfur protein family. In terms of assembly, the MFR complex is composed of three subunits: a flavoprotein (SdhA), an iron-sulfur protein (SdhB), and one hydrophobic anchor protein (SdhE). [2Fe-2S] cluster is required as a cofactor. The cofactor is [4Fe-4S] cluster.

Its subcellular location is the periplasm. It localises to the cell membrane. The enzyme catalyses 8-methylmenaquinone-6 + succinate = 8-methylmenaquinol-6 + fumarate. Its function is as follows. Iron-sulfur subunit of 8-methylmenaquinol:fumarate reductase (MFR), that catalyzes the reduction of fumarate using 8-methylmenaquinol-6 as electron donor. The complex shows no succinate oxidation activity. Is involved in anaerobic metabolism. The polypeptide is 8-methylmenaquinol:fumarate reductase iron-sulfur subunit (Wolinella succinogenes (strain ATCC 29543 / DSM 1740 / CCUG 13145 / JCM 31913 / LMG 7466 / NCTC 11488 / FDC 602W) (Vibrio succinogenes)).